The chain runs to 488 residues: Ribulose bisphosphate carboxylase large chain (488 aa).

Substrate is bound by residues asparagine 127 and threonine 177. Lysine 179 serves as the catalytic Proton acceptor. Lysine 181 serves as a coordination point for substrate. Residues lysine 205, aspartate 207, and glutamate 208 each contribute to the Mg(2+) site. Position 205 is an N6-carboxylysine (lysine 205). Histidine 297 (proton acceptor) is an active-site residue. Residues arginine 298, histidine 330, and serine 382 each coordinate substrate.

Belongs to the RuBisCO large chain family. Type I subfamily. In terms of assembly, heterohexadecamer of 8 large chains and 8 small chains. Requires Mg(2+) as cofactor.

It localises to the plastid. The protein localises to the chloroplast. The enzyme catalyses 2 (2R)-3-phosphoglycerate + 2 H(+) = D-ribulose 1,5-bisphosphate + CO2 + H2O. It carries out the reaction D-ribulose 1,5-bisphosphate + O2 = 2-phosphoglycolate + (2R)-3-phosphoglycerate + 2 H(+). Its function is as follows. RuBisCO catalyzes two reactions: the carboxylation of D-ribulose 1,5-bisphosphate, the primary event in carbon dioxide fixation, as well as the oxidative fragmentation of the pentose substrate in the photorespiration process. Both reactions occur simultaneously and in competition at the same active site. The polypeptide is Ribulose bisphosphate carboxylase large chain (Cyanidium caldarium (Red alga)).